We begin with the raw amino-acid sequence, 192 residues long: Ion-translocating oxidoreductase complex subunit A (192 aa).

Transmembrane regions (helical) follow at residues 5–25 (ILLI…FLGL), 39–59 (VGMG…AYLV), 63–83 (ILIP…VIAV), 102–122 (LLGI…VALL), 134–154 (VVYG…FAAL), and 171–191 (SIAL…TGLV).

This sequence belongs to the NqrDE/RnfAE family. In terms of assembly, the complex is composed of six subunits: RnfA, RnfB, RnfC, RnfD, RnfE and RnfG.

Its subcellular location is the cell inner membrane. Part of a membrane-bound complex that couples electron transfer with translocation of ions across the membrane. The polypeptide is Ion-translocating oxidoreductase complex subunit A (Haemophilus influenzae (strain ATCC 51907 / DSM 11121 / KW20 / Rd)).